Consider the following 338-residue polypeptide: Ketol-acid reductoisomerase (NADP(+)) (338 aa).

The KARI N-terminal Rossmann domain occupies 1–181 (MHVYYDKDCD…GGGRTGIIET (181 aa)). NADP(+) is bound by residues 24–27 (YGSQ), Arg47, Ser50, Thr52, and 82–85 (DEFQ). Residue His107 is part of the active site. Gly133 provides a ligand contact to NADP(+). The region spanning 182-327 (TFKDETETDL…AKLRAMMPWI (146 aa)) is the KARI C-terminal knotted domain. Asp190, Glu194, Glu226, and Glu230 together coordinate Mg(2+). Ser251 is a binding site for substrate.

Belongs to the ketol-acid reductoisomerase family. The cofactor is Mg(2+).

It carries out the reaction (2R)-2,3-dihydroxy-3-methylbutanoate + NADP(+) = (2S)-2-acetolactate + NADPH + H(+). The enzyme catalyses (2R,3R)-2,3-dihydroxy-3-methylpentanoate + NADP(+) = (S)-2-ethyl-2-hydroxy-3-oxobutanoate + NADPH + H(+). It participates in amino-acid biosynthesis; L-isoleucine biosynthesis; L-isoleucine from 2-oxobutanoate: step 2/4. It functions in the pathway amino-acid biosynthesis; L-valine biosynthesis; L-valine from pyruvate: step 2/4. Its function is as follows. Involved in the biosynthesis of branched-chain amino acids (BCAA). Catalyzes an alkyl-migration followed by a ketol-acid reduction of (S)-2-acetolactate (S2AL) to yield (R)-2,3-dihydroxy-isovalerate. In the isomerase reaction, S2AL is rearranged via a Mg-dependent methyl migration to produce 3-hydroxy-3-methyl-2-ketobutyrate (HMKB). In the reductase reaction, this 2-ketoacid undergoes a metal-dependent reduction by NADPH to yield (R)-2,3-dihydroxy-isovalerate. The sequence is that of Ketol-acid reductoisomerase (NADP(+)) from Cellvibrio japonicus (strain Ueda107) (Pseudomonas fluorescens subsp. cellulosa).